The following is a 475-amino-acid chain: Ribulose bisphosphate carboxylase large chain (475 aa).

Residues 1–2 constitute a propeptide that is removed on maturation; it reads MS. P3 carries the post-translational modification N-acetylproline. K14 carries the post-translational modification N6,N6,N6-trimethyllysine. 2 residues coordinate substrate: N123 and T173. K175 acts as the Proton acceptor in catalysis. A substrate-binding site is contributed by K177. Residues K201, D203, and E204 each contribute to the Mg(2+) site. K201 bears the N6-carboxylysine mark. H294 (proton acceptor) is an active-site residue. Substrate contacts are provided by R295, H327, and S379.

This sequence belongs to the RuBisCO large chain family. Type I subfamily. Heterohexadecamer of 8 large chains and 8 small chains; disulfide-linked. The disulfide link is formed within the large subunit homodimers. Mg(2+) serves as cofactor. Post-translationally, the disulfide bond which can form in the large chain dimeric partners within the hexadecamer appears to be associated with oxidative stress and protein turnover.

The protein localises to the plastid. It is found in the chloroplast. It carries out the reaction 2 (2R)-3-phosphoglycerate + 2 H(+) = D-ribulose 1,5-bisphosphate + CO2 + H2O. It catalyses the reaction D-ribulose 1,5-bisphosphate + O2 = 2-phosphoglycolate + (2R)-3-phosphoglycerate + 2 H(+). Functionally, ruBisCO catalyzes two reactions: the carboxylation of D-ribulose 1,5-bisphosphate, the primary event in carbon dioxide fixation, as well as the oxidative fragmentation of the pentose substrate in the photorespiration process. Both reactions occur simultaneously and in competition at the same active site. In Angiopteris lygodiifolia (Turnip fern), this protein is Ribulose bisphosphate carboxylase large chain.